A 78-amino-acid chain; its full sequence is RNA-binding protein Hfq (78 aa).

One can recognise a Sm domain in the interval 10-69 (DPFLNTLRKEHVPVSIYLVNGIKLQGQIESFDQYVVLLRNTVTQMVYKHAISTVVPARAV).

Belongs to the Hfq family. Homohexamer.

RNA chaperone that binds small regulatory RNA (sRNAs) and mRNAs to facilitate mRNA translational regulation in response to envelope stress, environmental stress and changes in metabolite concentrations. Also binds with high specificity to tRNAs. The chain is RNA-binding protein Hfq from Bordetella petrii (strain ATCC BAA-461 / DSM 12804 / CCUG 43448).